A 285-amino-acid polypeptide reads, in one-letter code: uncharacterized protein (285 aa).

The next 6 helical transmembrane spans lie at 7–29 (FYRL…LTLQ), 49–71 (LVVW…STFF), 95–117 (IFLY…SNTL), 137–156 (FFSE…VLHA), 232–254 (KVVN…TVAL), and 259–281 (GGLS…IFVV).

It is found in the cell membrane. This is an uncharacterized protein from Aquifex aeolicus (strain VF5).